The sequence spans 264 residues: Indole-3-glycerol phosphate synthase (264 aa).

This sequence belongs to the TrpC family.

The catalysed reaction is 1-(2-carboxyphenylamino)-1-deoxy-D-ribulose 5-phosphate + H(+) = (1S,2R)-1-C-(indol-3-yl)glycerol 3-phosphate + CO2 + H2O. Its pathway is amino-acid biosynthesis; L-tryptophan biosynthesis; L-tryptophan from chorismate: step 4/5. The polypeptide is Indole-3-glycerol phosphate synthase (Xylella fastidiosa (strain 9a5c)).